The chain runs to 168 residues: Small ribosomal subunit protein uS9 (168 aa).

A compositionally biased stretch (low complexity) spans Met-1–Ala-11. Residues Met-1–Arg-36 are disordered.

It belongs to the universal ribosomal protein uS9 family.

This chain is Small ribosomal subunit protein uS9, found in Pseudarthrobacter chlorophenolicus (strain ATCC 700700 / DSM 12829 / CIP 107037 / JCM 12360 / KCTC 9906 / NCIMB 13794 / A6) (Arthrobacter chlorophenolicus).